The following is a 279-amino-acid chain: Tryptophan synthase alpha chain (279 aa).

Active-site proton acceptor residues include glutamate 50 and aspartate 61.

The protein belongs to the TrpA family. Tetramer of two alpha and two beta chains.

It catalyses the reaction (1S,2R)-1-C-(indol-3-yl)glycerol 3-phosphate + L-serine = D-glyceraldehyde 3-phosphate + L-tryptophan + H2O. The protein operates within amino-acid biosynthesis; L-tryptophan biosynthesis; L-tryptophan from chorismate: step 5/5. The alpha subunit is responsible for the aldol cleavage of indoleglycerol phosphate to indole and glyceraldehyde 3-phosphate. In Brucella melitensis biotype 2 (strain ATCC 23457), this protein is Tryptophan synthase alpha chain.